The primary structure comprises 130 residues: Small ribosomal subunit protein uS11c (130 aa).

It belongs to the universal ribosomal protein uS11 family. Part of the 30S ribosomal subunit.

The protein localises to the plastid. It is found in the chloroplast. The polypeptide is Small ribosomal subunit protein uS11c (Mesostigma viride (Green alga)).